The chain runs to 319 residues: Acetyl-coenzyme A carboxylase carboxyl transferase subunit alpha (319 aa).

In terms of domain architecture, CoA carboxyltransferase C-terminal spans 39-293 (RLQKKSNDLT…KAVLEKQLHE (255 aa)).

This sequence belongs to the AccA family. In terms of assembly, acetyl-CoA carboxylase is a heterohexamer composed of biotin carboxyl carrier protein (AccB), biotin carboxylase (AccC) and two subunits each of ACCase subunit alpha (AccA) and ACCase subunit beta (AccD).

It localises to the cytoplasm. It carries out the reaction N(6)-carboxybiotinyl-L-lysyl-[protein] + acetyl-CoA = N(6)-biotinyl-L-lysyl-[protein] + malonyl-CoA. It functions in the pathway lipid metabolism; malonyl-CoA biosynthesis; malonyl-CoA from acetyl-CoA: step 1/1. Its function is as follows. Component of the acetyl coenzyme A carboxylase (ACC) complex. First, biotin carboxylase catalyzes the carboxylation of biotin on its carrier protein (BCCP) and then the CO(2) group is transferred by the carboxyltransferase to acetyl-CoA to form malonyl-CoA. This Neisseria meningitidis serogroup B (strain ATCC BAA-335 / MC58) protein is Acetyl-coenzyme A carboxylase carboxyl transferase subunit alpha.